A 198-amino-acid polypeptide reads, in one-letter code: Superoxide dismutase [Fe] (198 aa).

Positions 27, 74, 158, and 162 each coordinate Fe cation.

The protein belongs to the iron/manganese superoxide dismutase family. Homodimer. The cofactor is Fe cation.

It localises to the cytoplasm. It carries out the reaction 2 superoxide + 2 H(+) = H2O2 + O2. Its function is as follows. Destroys superoxide anion radicals which are normally produced within the cells and which are toxic to biological systems. This is Superoxide dismutase [Fe] (SODB) from Plasmodium falciparum (isolate 3D7).